Consider the following 198-residue polypeptide: Recombination protein RecR (198 aa).

The C4-type zinc-finger motif lies at 56–71 (CEICGNVSEQATCSIC). Positions 79–174 (ALICVVEEAK…RVTRLASGLP (96 aa)) constitute a Toprim domain.

Belongs to the RecR family.

In terms of biological role, may play a role in DNA repair. It seems to be involved in an RecBC-independent recombinational process of DNA repair. It may act with RecF and RecO. This chain is Recombination protein RecR, found in Leifsonia xyli subsp. xyli (strain CTCB07).